Consider the following 263-residue polypeptide: Linear gramicidin dehydrogenase LgrE (263 aa).

Residue Ser96 is part of the active site.

This sequence belongs to the thioesterase family.

In terms of biological role, in the final step of gramicidin biosynthesis, reduces the pentadecapeptide-aldehyde intermediate, that is released from the terminal module of the non-ribosomal peptide synthetase LgrD, to the final product ethanolamine-containing gramicidin. The protein is Linear gramicidin dehydrogenase LgrE (lgrE) of Brevibacillus parabrevis.